The primary structure comprises 637 residues: tRNA-dihydrouridine(47) synthase [NAD(P)(+)]-like (637 aa).

Disordered stretches follow at residues M1–R21, L41–A63, and E85–A105. Over residues P89–P104 the composition is skewed to basic residues. C3H1-type zinc fingers lie at residues Y107–G137 and A145–P175. Position 260 is a phosphothreonine (T260). 2 positions are modified to phosphoserine: S263 and S264. FMN contacts are provided by residues P298–T300 and Q352. The Proton donor role is filled by C383. A Glycyl lysine isopeptide (Lys-Gly) (interchain with G-Cter in SUMO2) cross-link involves residue K403. FMN contacts are provided by residues K422, H452, N484–D486, and A507–R508.

It belongs to the Dus family. Dus3 subfamily. Requires FMN as cofactor.

The catalysed reaction is 5,6-dihydrouridine(47) in tRNA + NAD(+) = uridine(47) in tRNA + NADH + H(+). The enzyme catalyses 5,6-dihydrouridine(47) in tRNA + NADP(+) = uridine(47) in tRNA + NADPH + H(+). It carries out the reaction a 5,6-dihydrouridine in mRNA + NAD(+) = a uridine in mRNA + NADH + H(+). It catalyses the reaction a 5,6-dihydrouridine in mRNA + NADP(+) = a uridine in mRNA + NADPH + H(+). Its function is as follows. Catalyzes the synthesis of dihydrouridine, a modified base, in various RNAs, such as tRNAs, mRNAs and some long non-coding RNAs (lncRNAs). Mainly modifies the uridine in position 47 (U47) in the D-loop of most cytoplasmic tRNAs. Also able to mediate the formation of dihydrouridine in some mRNAs, thereby regulating their translation. The sequence is that of tRNA-dihydrouridine(47) synthase [NAD(P)(+)]-like from Mus musculus (Mouse).